We begin with the raw amino-acid sequence, 145 residues long: Transcriptional regulator SlyA (145 aa).

The region spanning 2 to 135 is the HTH marR-type domain; sequence ELPLGSDLAR…LALLVARLEK (134 aa). Positions 49 to 72 form a DNA-binding region, H-T-H motif; the sequence is QIQLAKAIGIEQPSLVRTLDQLEE.

The protein belongs to the SlyA family. Homodimer.

In terms of biological role, transcription regulator that can specifically activate or repress expression of target genes. The chain is Transcriptional regulator SlyA from Pectobacterium carotovorum subsp. carotovorum (strain PC1).